The primary structure comprises 272 residues: DNA repair protein RecO (272 aa).

Belongs to the RecO family.

Involved in DNA repair and RecF pathway recombination. This Latilactobacillus sakei subsp. sakei (strain 23K) (Lactobacillus sakei subsp. sakei) protein is DNA repair protein RecO.